The following is a 1016-amino-acid chain: Enhancer of polycomb-like protein 1 (1016 aa).

5 disordered regions span residues 1-50, 96-119, 450-488, 499-518, and 842-1016; these read MAIH…NDLE, LLGS…DASV, KEED…TIGT, GQVH…VKLP, and ARMR…PNRK. Residues 35 to 50 are compositionally biased toward polar residues; the sequence is YKQSDLPTLNASNDLE. 2 stretches are compositionally biased toward basic and acidic residues: residues 103–116 and 457–473; these read DGDK…KKTD and ESSK…DSSR. Over residues 475 to 488 the composition is skewed to polar residues; that stretch reads GSATSMPGSATIGT. Low complexity predominate over residues 842–883; the sequence is ARMRTLQQQQRNNKQQAAGQSSGSSSASLGSNTNSNSSISGQ. Over residues 884-902 the composition is skewed to polar residues; that stretch reads ADQGQTNLTNSGITRQGGA. The span at 904 to 923 shows a compositional bias: low complexity; it reads VNGSQTSTTNNTRSSVSGGS. The segment covering 928 to 956 has biased composition (polar residues); sequence LPTQSSQRSNTNSPLLASQPQGYSQQQKF. Low complexity predominate over residues 960–971; the sequence is PPTSQSQSQSPT. Residues 976 to 994 are compositionally biased toward polar residues; sequence QLQTSKMYNKHGSNITPSN.

The protein belongs to the enhancer of polycomb family. Component of the NuA4 histone acetyltransferase complex.

It localises to the nucleus. Its function is as follows. Component of the NuA4 histone acetyltransferase complex which is involved in transcriptional activation of selected genes principally by acetylation of nucleosomal histone H4 and H2A. The NuA4 complex is also involved in DNA repair. Involved in gene silencing by neighboring heterochromatin, blockage of the silencing spreading along the chromosome, and required for cell cycle progression through G2/M. The chain is Enhancer of polycomb-like protein 1 (EPL1) from Debaryomyces hansenii (strain ATCC 36239 / CBS 767 / BCRC 21394 / JCM 1990 / NBRC 0083 / IGC 2968) (Yeast).